The primary structure comprises 345 residues: UDP-3-O-acylglucosamine N-acyltransferase 3 (345 aa).

His236 serves as the catalytic Proton acceptor.

The protein belongs to the transferase hexapeptide repeat family. LpxD subfamily. As to quaternary structure, homotrimer.

It carries out the reaction a UDP-3-O-[(3R)-3-hydroxyacyl]-alpha-D-glucosamine + a (3R)-hydroxyacyl-[ACP] = a UDP-2-N,3-O-bis[(3R)-3-hydroxyacyl]-alpha-D-glucosamine + holo-[ACP] + H(+). The protein operates within bacterial outer membrane biogenesis; LPS lipid A biosynthesis. Functionally, catalyzes the N-acylation of UDP-3-O-acylglucosamine using 3-hydroxyacyl-ACP as the acyl donor. Is involved in the biosynthesis of lipid A, a phosphorylated glycolipid that anchors the lipopolysaccharide to the outer membrane of the cell. In Gloeobacter violaceus (strain ATCC 29082 / PCC 7421), this protein is UDP-3-O-acylglucosamine N-acyltransferase 3.